A 1203-amino-acid chain; its full sequence is DNA-directed RNA polymerase subunit beta (1203 aa).

Basic and acidic residues predominate over residues 1174–1195 (AAQEAKAAFEAEEAEKATKAEA). Positions 1174–1203 (AAQEAKAAFEAEEAEKATKAEATEEAAEQE) are disordered.

The protein belongs to the RNA polymerase beta chain family. As to quaternary structure, the RNAP catalytic core consists of 2 alpha, 1 beta, 1 beta' and 1 omega subunit. When a sigma factor is associated with the core the holoenzyme is formed, which can initiate transcription.

The enzyme catalyses RNA(n) + a ribonucleoside 5'-triphosphate = RNA(n+1) + diphosphate. Its function is as follows. DNA-dependent RNA polymerase catalyzes the transcription of DNA into RNA using the four ribonucleoside triphosphates as substrates. The polypeptide is DNA-directed RNA polymerase subunit beta (Streptococcus pneumoniae (strain JJA)).